A 1036-amino-acid chain; its full sequence is Chitin synthase 1 (1036 aa).

Pro residues predominate over residues 1–10 (MDGPPSPTRV). The tract at residues 1–153 (MDGPPSPTRV…RRPLPPAPLF (153 aa)) is disordered. Residue Asn-38 is glycosylated (N-linked (GlcNAc...) asparagine). Over residues 86–108 (PSIPLSSSNPRSPIRPSTPSRVS) the composition is skewed to low complexity. Asn-179 carries N-linked (GlcNAc...) asparagine glycosylation. The segment at 189-229 (RASLKSAHSYTTDSTFTEDDDITNEKLNHYGPAPEGRQDRR) is disordered. Positions 194–203 (SAHSYTTDST) are enriched in polar residues. The next 7 helical transmembrane spans lie at 659–679 (FISL…FYFV), 699–719 (IFVI…ILSL), 733–753 (TMVT…YIVI), 776–796 (IFTN…LMSF), 808–828 (SAQY…YAFC), 908–928 (YVVA…SEAY), and 945–967 (WSVA…INIV). The segment at 994-1019 (AGLGSGFSESGKTGITSGSGMSGMSL) is disordered. Residues 1001–1019 (SESGKTGITSGSGMSGMSL) are compositionally biased toward low complexity.

This sequence belongs to the chitin synthase family. Class II subfamily.

It is found in the cell membrane. It catalyses the reaction [(1-&gt;4)-N-acetyl-beta-D-glucosaminyl](n) + UDP-N-acetyl-alpha-D-glucosamine = [(1-&gt;4)-N-acetyl-beta-D-glucosaminyl](n+1) + UDP + H(+). In terms of biological role, polymerizes chitin, a structural polymer of the cell wall and septum, by transferring the sugar moiety of UDP-GlcNAc to the non-reducing end of the growing chitin polymer. CHS1 mainly responsible for normal yeast cell reproductive growth. The sequence is that of Chitin synthase 1 from Exophiala dermatitidis (strain ATCC 34100 / CBS 525.76 / NIH/UT8656) (Black yeast).